A 133-amino-acid polypeptide reads, in one-letter code: Small ribosomal subunit protein uS19 (133 aa).

Belongs to the universal ribosomal protein uS19 family. As to quaternary structure, part of the 30S ribosomal subunit.

Protein S19 forms a complex with S13 that binds strongly to the 16S ribosomal RNA. In Thermococcus kodakarensis (strain ATCC BAA-918 / JCM 12380 / KOD1) (Pyrococcus kodakaraensis (strain KOD1)), this protein is Small ribosomal subunit protein uS19.